Reading from the N-terminus, the 200-residue chain is Large ribosomal subunit protein uL4 (200 aa).

Residues 43–65 (RAQKTRSEVSGGGAKPWRQKGTG) are disordered.

It belongs to the universal ribosomal protein uL4 family. As to quaternary structure, part of the 50S ribosomal subunit.

Its function is as follows. One of the primary rRNA binding proteins, this protein initially binds near the 5'-end of the 23S rRNA. It is important during the early stages of 50S assembly. It makes multiple contacts with different domains of the 23S rRNA in the assembled 50S subunit and ribosome. In terms of biological role, forms part of the polypeptide exit tunnel. The polypeptide is Large ribosomal subunit protein uL4 (Aliivibrio salmonicida (strain LFI1238) (Vibrio salmonicida (strain LFI1238))).